The sequence spans 309 residues: Probable nitrogen assimilation transcriptional activator (309 aa).

The HTH lysR-type domain occupies 1 to 57 (MRLEQLQAFLKVAELGSFQQAALQSEVTQSTISRQIQGLESALKCQLFHRGAQAKLT). A DNA-binding region (H-T-H motif) is located at residues 18–38 (FQQAALQSEVTQSTISRQIQG).

It belongs to the LysR transcriptional regulatory family.

Its function is as follows. Seems to regulate utilization of fixed nitrogen by controlling the expression of a certain gene(s) involved in nitrogen metabolism. The sequence is that of Probable nitrogen assimilation transcriptional activator (ntcB) from Synechocystis sp. (strain ATCC 27184 / PCC 6803 / Kazusa).